The chain runs to 425 residues: Probable threonylcarbamoyladenosine tRNA methylthiotransferase (425 aa).

In terms of domain architecture, MTTase N-terminal spans 2 to 110; it reads VKVYIENYGC…IVQAVEYAMR (109 aa). Cys11, Cys47, Cys76, Cys148, Cys152, and Cys155 together coordinate [4Fe-4S] cluster. Residues 134 to 363 enclose the Radical SAM core domain; that stretch reads SPRNVYFILP…HRIRLQISYE (230 aa). In terms of domain architecture, TRAM spans 366–425; sequence RKYIGKKVKVLIHGEGKKGNVDAVTMNYKHIILPEGRKGEFREARVKNAASTYLLGEIIT.

Belongs to the methylthiotransferase family. CDKAL1 subfamily. It depends on [4Fe-4S] cluster as a cofactor.

It carries out the reaction N(6)-L-threonylcarbamoyladenosine(37) in tRNA + (sulfur carrier)-SH + AH2 + 2 S-adenosyl-L-methionine = 2-methylsulfanyl-N(6)-L-threonylcarbamoyladenosine(37) in tRNA + (sulfur carrier)-H + 5'-deoxyadenosine + L-methionine + A + S-adenosyl-L-homocysteine + 2 H(+). In terms of biological role, catalyzes the methylthiolation of N6-threonylcarbamoyladenosine (t(6)A), leading to the formation of 2-methylthio-N6-threonylcarbamoyladenosine (ms(2)t(6)A) at position 37 in tRNAs that read codons beginning with adenine. The polypeptide is Probable threonylcarbamoyladenosine tRNA methylthiotransferase (Pyrococcus horikoshii (strain ATCC 700860 / DSM 12428 / JCM 9974 / NBRC 100139 / OT-3)).